Here is a 286-residue protein sequence, read N- to C-terminus: ATSNSKPTQVLLATFLTFFFLLLNNVNSSDELSFTINNFVPNEADLLFQGEASVSSTGVLQLTRVENGQPQQYSVGRALYAAPVRIWDNTTGSVASFSTSFTFVVKAPNPTITSDGLAFFLAPPDSQIPSGRVSKYLGLFNNSNSDSSNQIVAVEFDTYFGHSYDPWDPNYRHIGIDVNGIESIKTVQWDWINGGVAFATITYLAPNKTLIASLVYPSNQTSFIVAASVDLKEILPEWVRVGFSAATGYPTQVETHDVLSWSFTSTLEANSDAATENNVHIARYTA.

The first 28 residues, 1-28 (ATSNSKPTQVLLATFLTFFFLLLNNVNS), serve as a signal peptide directing secretion. Tyrosine 73 provides a ligand contact to N-acetyl-alpha-neuraminyl-(2-&gt;3)-beta-D-galactosyl-(1-&gt;4)-beta-D-glucose. A glycan (N-linked (GlcNAc...) asparagine) is linked at asparagine 89. N-acetyl-alpha-neuraminyl-(2-&gt;3)-beta-D-galactosyl-(1-&gt;4)-beta-D-glucose is bound by residues aspartate 115 and lysine 135. Residue asparagine 141 is glycosylated (N-linked (GlcNAc...) asparagine). Residues glutamate 155 and aspartate 157 each contribute to the Mn(2+) site. Aspartate 157, tyrosine 159, aspartate 165, and aspartate 168 together coordinate Ca(2+). Positions 159 and 165 each coordinate N-acetyl-alpha-neuraminyl-(2-&gt;3)-beta-D-galactosyl-(1-&gt;4)-beta-D-glucose. Residues aspartate 168 and histidine 173 each contribute to the Mn(2+) site. 2 N-linked (GlcNAc...) asparagine glycosylation sites follow: asparagine 207 and asparagine 219. Residues 278–286 (NVHIARYTA) constitute a propeptide, removed in mature form.

This sequence belongs to the leguminous lectin family.

Its function is as follows. Sialic acid-binding lectin specifically recognizing the trisaccharide sequence Neu5Ac/Gc-alpha-2,3-Gal-beta-1,4-GlcNAc/Glc. The polypeptide is Bark leucoagglutinin (Maackia amurensis (Amur maackia)).